Reading from the N-terminus, the 460-residue chain is NADH-ubiquinone oxidoreductase chain 4 (460 aa).

The next 12 helical transmembrane spans lie at 20–42 (PKWLWTTTTAHSLLIASISLMWF), 61–81 (PLSTPLLVLTCWLLPLMILAS), 93–113 (QRLYITLLASLQTFLIMAFGA), 114–134 (TEIIMFYIMFEATLIPTLIII), 148–168 (TYFLFYTLAGSLPLLVALLLL), 195–215 (IWWAACLIAFLVKMPLYGVHL), 225–245 (PVAGSMVLAAVLLKLGGYGMM), 258–278 (LAYPFIILALWGIIMTGSICL), 285–304 (SLIAYSSVSHMGLVAGGILI), 308–330 (WGFSGAIILMIAHGLVSSALFCL), 351–371 (IIFPLTAVWWFIANLANLALP), and 394–414 (ILLTGLGTLITAGYSLYMFLM).

This sequence belongs to the complex I subunit 4 family.

Its subcellular location is the mitochondrion membrane. It carries out the reaction a ubiquinone + NADH + 5 H(+)(in) = a ubiquinol + NAD(+) + 4 H(+)(out). Functionally, core subunit of the mitochondrial membrane respiratory chain NADH dehydrogenase (Complex I) that is believed to belong to the minimal assembly required for catalysis. Complex I functions in the transfer of electrons from NADH to the respiratory chain. The immediate electron acceptor for the enzyme is believed to be ubiquinone. The chain is NADH-ubiquinone oxidoreductase chain 4 (MT-ND4) from Carassius auratus (Goldfish).